We begin with the raw amino-acid sequence, 400 residues long: Methylthioribose kinase (400 aa).

ATP-binding positions include N40, K57, and 111–113 (EDL). Position 229 (D229) interacts with substrate. 246–248 (DAE) is an ATP binding site. R344 contacts substrate.

This sequence belongs to the methylthioribose kinase family. As to quaternary structure, homodimer.

It catalyses the reaction 5-(methylsulfanyl)-D-ribose + ATP = 5-(methylsulfanyl)-alpha-D-ribose 1-phosphate + ADP + H(+). It functions in the pathway amino-acid biosynthesis; L-methionine biosynthesis via salvage pathway; S-methyl-5-thio-alpha-D-ribose 1-phosphate from S-methyl-5'-thioadenosine (hydrolase route): step 2/2. In terms of biological role, catalyzes the phosphorylation of methylthioribose into methylthioribose-1-phosphate. The sequence is that of Methylthioribose kinase from Pectobacterium atrosepticum (strain SCRI 1043 / ATCC BAA-672) (Erwinia carotovora subsp. atroseptica).